Reading from the N-terminus, the 952-residue chain is UvrABC system protein A (952 aa).

31-38 (GVSGSGKS) is an ATP binding site. The segment at 253–280 (CPEHGSVLEELEPRIFSFNSPYGACPAC) adopts a C4-type zinc-finger fold. 2 ABC transporter domains span residues 309–591 (WSRG…PQSL) and 611–938 (GNGK…AFLA). 643–650 (GPSGSGKS) lines the ATP pocket. The C4-type zinc-finger motif lies at 742–768 (CEACGGDGTVKIEMLFLPDLYVPCEVC).

The protein belongs to the ABC transporter superfamily. UvrA family. Forms a heterotetramer with UvrB during the search for lesions.

It is found in the cytoplasm. In terms of biological role, the UvrABC repair system catalyzes the recognition and processing of DNA lesions. UvrA is an ATPase and a DNA-binding protein. A damage recognition complex composed of 2 UvrA and 2 UvrB subunits scans DNA for abnormalities. When the presence of a lesion has been verified by UvrB, the UvrA molecules dissociate. This is UvrABC system protein A from Thermus thermophilus (strain ATCC 27634 / DSM 579 / HB8).